The following is a 165-amino-acid chain: Chorismate pyruvate-lyase (165 aa).

Residues Arg-77, Leu-115, and Glu-156 each contribute to the substrate site.

It belongs to the UbiC family. As to quaternary structure, monomer.

Its subcellular location is the cytoplasm. The enzyme catalyses chorismate = 4-hydroxybenzoate + pyruvate. It functions in the pathway cofactor biosynthesis; ubiquinone biosynthesis. In terms of biological role, removes the pyruvyl group from chorismate, with concomitant aromatization of the ring, to provide 4-hydroxybenzoate (4HB) for the ubiquinone pathway. The sequence is that of Chorismate pyruvate-lyase from Salmonella typhi.